A 282-amino-acid polypeptide reads, in one-letter code: sn-glycerol-3-phosphate transport system permease protein UgpE (282 aa).

The next 6 helical transmembrane spans lie at 14-34, 86-106, 112-132, 146-168, 201-221, and 248-268; these read LILILGIIIVAFPIYYTFVAS, MAIAVGKIIISFMSAFAIVFF, MFFFWMIFITLMLPVEVRILP, YAGLTLPLMASATATFLFRQFFL, IAALFVILFIYGWTQYLWPLL, and WNYVMVTAILAIIPPILVVVL. Residues 78-269 enclose the ABC transmembrane type-1 domain; the sequence is LWNSFVVAMA…IPPILVVVLM (192 aa).

The protein belongs to the binding-protein-dependent transport system permease family. As to quaternary structure, the complex is composed of two ATP-binding proteins (UgpC), two transmembrane proteins (UgpA and UgpE) and a solute-binding protein (UgpB).

It localises to the cell inner membrane. Part of the ABC transporter complex UgpBAEC involved in sn-glycerol-3-phosphate (G3P) import. Probably responsible for the translocation of the substrate across the membrane. The chain is sn-glycerol-3-phosphate transport system permease protein UgpE (ugpE) from Brucella melitensis biotype 1 (strain ATCC 23456 / CCUG 17765 / NCTC 10094 / 16M).